Here is a 309-residue protein sequence, read N- to C-terminus: Ribonuclease Z (309 aa).

7 residues coordinate Zn(2+): His63, His65, Asp67, His68, His145, Asp216, and His274. Asp67 functions as the Proton acceptor in the catalytic mechanism.

The protein belongs to the RNase Z family. In terms of assembly, homodimer. It depends on Zn(2+) as a cofactor.

It carries out the reaction Endonucleolytic cleavage of RNA, removing extra 3' nucleotides from tRNA precursor, generating 3' termini of tRNAs. A 3'-hydroxy group is left at the tRNA terminus and a 5'-phosphoryl group is left at the trailer molecule.. Its function is as follows. Zinc phosphodiesterase, which displays some tRNA 3'-processing endonuclease activity. Probably involved in tRNA maturation, by removing a 3'-trailer from precursor tRNA. This Streptococcus equi subsp. equi (strain 4047) protein is Ribonuclease Z.